Reading from the N-terminus, the 356-residue chain is UDP-N-acetylglucosamine--N-acetylmuramyl-(pentapeptide) pyrophosphoryl-undecaprenol N-acetylglucosamine transferase (356 aa).

Arginine 166, serine 196, and glutamine 290 together coordinate UDP-N-acetyl-alpha-D-glucosamine.

The protein belongs to the glycosyltransferase 28 family. MurG subfamily.

The protein resides in the cell membrane. The enzyme catalyses Mur2Ac(oyl-L-Ala-gamma-D-Glu-L-Lys-D-Ala-D-Ala)-di-trans,octa-cis-undecaprenyl diphosphate + UDP-N-acetyl-alpha-D-glucosamine = beta-D-GlcNAc-(1-&gt;4)-Mur2Ac(oyl-L-Ala-gamma-D-Glu-L-Lys-D-Ala-D-Ala)-di-trans,octa-cis-undecaprenyl diphosphate + UDP + H(+). It participates in cell wall biogenesis; peptidoglycan biosynthesis. Its function is as follows. Cell wall formation. Catalyzes the transfer of a GlcNAc subunit on undecaprenyl-pyrophosphoryl-MurNAc-pentapeptide (lipid intermediate I) to form undecaprenyl-pyrophosphoryl-MurNAc-(pentapeptide)GlcNAc (lipid intermediate II). This chain is UDP-N-acetylglucosamine--N-acetylmuramyl-(pentapeptide) pyrophosphoryl-undecaprenol N-acetylglucosamine transferase, found in Staphylococcus aureus (strain bovine RF122 / ET3-1).